Here is a 344-residue protein sequence, read N- to C-terminus: tRNA N6-adenosine threonylcarbamoyltransferase (344 aa).

Residues His111 and His115 each contribute to the Fe cation site. Substrate is bound by residues 133-137 (LVSGG), Asp166, Gly179, and Asn283. A Fe cation-binding site is contributed by Asp311.

Belongs to the KAE1 / TsaD family. Fe(2+) is required as a cofactor.

It localises to the cytoplasm. It catalyses the reaction L-threonylcarbamoyladenylate + adenosine(37) in tRNA = N(6)-L-threonylcarbamoyladenosine(37) in tRNA + AMP + H(+). Required for the formation of a threonylcarbamoyl group on adenosine at position 37 (t(6)A37) in tRNAs that read codons beginning with adenine. Is involved in the transfer of the threonylcarbamoyl moiety of threonylcarbamoyl-AMP (TC-AMP) to the N6 group of A37, together with TsaE and TsaB. TsaD likely plays a direct catalytic role in this reaction. This Orientia tsutsugamushi (strain Boryong) (Rickettsia tsutsugamushi) protein is tRNA N6-adenosine threonylcarbamoyltransferase.